The primary structure comprises 208 residues: Thymidylate kinase (208 aa).

Residue 10-17 (GLEGAGKS) coordinates ATP.

Belongs to the thymidylate kinase family.

The enzyme catalyses dTMP + ATP = dTDP + ADP. Its function is as follows. Phosphorylation of dTMP to form dTDP in both de novo and salvage pathways of dTTP synthesis. The sequence is that of Thymidylate kinase from Pseudoalteromonas translucida (strain TAC 125).